We begin with the raw amino-acid sequence, 161 residues long: MATANAEQSIGPPEQAQVIQPPLPATITDLAALLEIPLDDCLVPCNFCGNFLTYLEICEFDEKRLSLIWKEYLVYACCRCCCTATATFEFNEFYESTVTGREIEDVTGKSIFDIDVRCQTCMKYLDAIEKLDICGRRRPFHLVRGSWKGICRLCKHFYNDW.

2 zinc fingers span residues 45 to 81 and 118 to 154; these read CNFCGNFLTYLEICEFDEKRLSLIWKEYLVYACCRCC and CQTCMKYLDAIEKLDICGRRRPFHLVRGSWKGICRLC.

Belongs to the papillomaviridae E6 protein family. As to quaternary structure, forms homodimers. Interacts with ubiquitin-protein ligase UBE3A/E6-AP; this interaction stimulates UBE3A ubiquitin activity. Interacts with host BAK1.

Its subcellular location is the host cytoplasm. It localises to the host nucleus. In terms of biological role, plays a major role in the induction and maintenance of cellular transformation. E6 associates with host UBE3A/E6-AP ubiquitin-protein ligase and modulates its activity. Protects host keratinocytes from apoptosis by mediating the degradation of host BAK1. May also inhibit host immune response. The sequence is that of Protein E6 from Homo sapiens (Human).